We begin with the raw amino-acid sequence, 306 residues long: Aspartate carbamoyltransferase catalytic subunit (306 aa).

Carbamoyl phosphate is bound by residues R55 and T56. K84 contacts L-aspartate. Carbamoyl phosphate contacts are provided by R105, H133, and Q136. Residues R166 and R227 each contribute to the L-aspartate site. The carbamoyl phosphate site is built by L265 and P266.

This sequence belongs to the aspartate/ornithine carbamoyltransferase superfamily. ATCase family. In terms of assembly, heterododecamer (2C3:3R2) of six catalytic PyrB chains organized as two trimers (C3), and six regulatory PyrI chains organized as three dimers (R2).

It catalyses the reaction carbamoyl phosphate + L-aspartate = N-carbamoyl-L-aspartate + phosphate + H(+). It functions in the pathway pyrimidine metabolism; UMP biosynthesis via de novo pathway; (S)-dihydroorotate from bicarbonate: step 2/3. Its function is as follows. Catalyzes the condensation of carbamoyl phosphate and aspartate to form carbamoyl aspartate and inorganic phosphate, the committed step in the de novo pyrimidine nucleotide biosynthesis pathway. This Neisseria gonorrhoeae (strain NCCP11945) protein is Aspartate carbamoyltransferase catalytic subunit.